The sequence spans 1027 residues: D-2-hydroxyglutarate dehydrogenase (1027 aa).

Residues 48–284 (YQQLPQAILF…CEAKLNLLLI (237 aa)) form the FAD-binding PCMH-type domain. (R)-2-hydroxyglutarate contacts are provided by R405 and H503. The 32-residue stretch at 665 to 696 (HEVKAAMDTCLACKACASQCPIKIDVPSFRAK) folds into the 4Fe-4S ferredoxin-type domain. [4Fe-4S] cluster contacts are provided by C674, C677, C680, and C684.

The protein in the N-terminal section; belongs to the FAD-binding oxidoreductase/transferase type 4 family. Homotetramer. The cofactor is [4Fe-4S] cluster. It depends on FAD as a cofactor.

The catalysed reaction is (R)-2-hydroxyglutarate + A = 2-oxoglutarate + AH2. Its function is as follows. Catalyzes the oxidation of D-2-hydroxyglutarate (D-2-HGA) to 2-oxoglutarate. Provides the way to recycle D-2-HGA produced during L-serine synthesis by SerA, by converting it back to 2-oxoglutarate. The physiological molecule that functions as the primary electron acceptor during D-2-HGA oxidation is unknown. The sequence is that of D-2-hydroxyglutarate dehydrogenase from Haemophilus influenzae (strain ATCC 51907 / DSM 11121 / KW20 / Rd).